We begin with the raw amino-acid sequence, 362 residues long: Molybdenum import ATP-binding protein ModC (362 aa).

Positions 2–236 (VSPIEVRLQM…LDLPLAMGDD (235 aa)) constitute an ABC transporter domain. Residue 34–41 (GPSGSGKT) coordinates ATP. One can recognise a Mop domain in the interval 297–362 (HSSILNRLPV…AQIKAVAVLA (66 aa)).

Belongs to the ABC transporter superfamily. Molybdate importer (TC 3.A.1.8) family. In terms of assembly, the complex is composed of two ATP-binding proteins (ModC), two transmembrane proteins (ModB) and a solute-binding protein (ModA).

The protein localises to the cell inner membrane. It carries out the reaction molybdate(out) + ATP + H2O = molybdate(in) + ADP + phosphate + H(+). Its function is as follows. Part of the ABC transporter complex ModABC involved in molybdenum import. Responsible for energy coupling to the transport system. This is Molybdenum import ATP-binding protein ModC from Pseudomonas syringae pv. tomato (strain ATCC BAA-871 / DC3000).